We begin with the raw amino-acid sequence, 394 residues long: Tubulin-like protein CetZ5 (394 aa).

GTP is bound by residues 10–14 (QAGGN), 110–112 (GTG), E142, N169, and N187.

Belongs to the CetZ family.

The protein localises to the cytoplasm. Its function is as follows. Involved in cell shape control. The polypeptide is Tubulin-like protein CetZ5 (Haloferax volcanii (strain ATCC 29605 / DSM 3757 / JCM 8879 / NBRC 14742 / NCIMB 2012 / VKM B-1768 / DS2) (Halobacterium volcanii)).